Consider the following 377-residue polypeptide: Proteinase-activated receptor 3 (377 aa).

The first 19 residues, 1-19 (MRAAIFAAIGALLLSPASC), serve as a signal peptide directing secretion. Positions 20–38 (QSGMEYDADNLAKPTLSIK) are cleaved as a propeptide — removed for receptor activation. The Extracellular portion of the chain corresponds to 39–94 (TFRGAPQNSFEEFPLSAIEGWTGTTKTVKIKCPEELDSNLHVNNATMGYLSSPLST). Residue N82 is glycosylated (N-linked (GlcNAc...) asparagine). The helical transmembrane segment at 95-120 (KLIPAIYILVFAVGMPANAVTLWMLF) threads the bilayer. Residues 121-127 (RTRTIRM) lie on the Cytoplasmic side of the membrane. The helical transmembrane segment at 128-147 (TIFYTNLAIADFLFCVTLPF) threads the bilayer. Residues 148–166 (RIAYHLNGNNWVFGEVMCR) lie on the Extracellular side of the membrane. Cysteines 165 and 244 form a disulfide. Residues 167-188 (ATTVIFYGNMYCSILLLACISI) traverse the membrane as a helical segment. Topologically, residues 189–205 (NRYLAIVHPFTYRGLPK) are cytoplasmic. A helical membrane pass occupies residues 206-229 (RTYALLTCGLVWTTVFLYMLPFFI). At 230–259 (LKQEYYLVQQDITTCHDVHNTCESSSPFQL) the chain is on the extracellular side. Residues 260–279 (YYFISLAFFGFLIPFLVIIY) traverse the membrane as a helical segment. Residues 280 to 296 (CYTAIIWTLNAKDRRWL) lie on the Cytoplasmic side of the membrane. A helical membrane pass occupies residues 297–321 (WYIKASLLTFVIFTICFAPSNIILI). The Extracellular portion of the chain corresponds to 322–335 (IHHANYYYSNTDAL). Residues 336-360 (YFVYLIALCLGSLNSCLDPFLYFLM) traverse the membrane as a helical segment. Topologically, residues 361-377 (SKITDHSTAYLTMVKLS) are cytoplasmic.

It belongs to the G-protein coupled receptor 1 family. In terms of assembly, interacts with INSC/inscuteable and GPSM2. A proteolytic cleavage generates a new N-terminus that functions as a tethered ligand.

The protein localises to the cell membrane. In terms of biological role, receptor for activated thrombin coupled to G proteins that stimulate phosphoinositide hydrolysis. In Bos taurus (Bovine), this protein is Proteinase-activated receptor 3 (F2RL2).